Here is a 467-residue protein sequence, read N- to C-terminus: MVPITSLAQTLERLRRKDYSCLELVETLIARCEAAKALNALLATDWGGLRRRAKKIDRHGNAGVGLRGIPLCFKANIATGIFPTTAATPALINHLPKIPSRIAERLFSAGALPGASGNMHELSFGITSNNYATGAVRNPWNPSLIPGGSSGGVAAAVASRLMLGGIGTDTGASVRLPAALCGVVGFRPTLGRYPRDRIIPVSPTRDTAGIIAQCVADVVILDQVISGRPARILPIPLKGLRIGLPTTYFYDDLDADVAFAAETTIRLLANRGVTFVEADIPHLEDLNSGASLPIALYEFPHALKQYLDDFVGTVSFSDVIKEIRSPDVANIVNAQIDGHQISNAEYELARQSFRPRLQAAYRNYFRLYRLDAILFPTAPLAAKAIGQDSSVIHNGSMVNTFKIYVRNVDPSSNAGLPGLSLPVGLTPDRLPVGMEIDGLAGSDHRLLAIGAALEKAINFRSFPDVLN.

Active-site charge relay system residues include Lys74 and Ser149. The active-site Acyl-ester intermediate is the Ser173.

This sequence belongs to the amidase family.

The protein operates within plant hormone metabolism; auxin biosynthesis. Hydrolyzes indole-3-acetamide (IAM) into indole-3-acetic acid (IAA). This chain is Indoleacetamide hydrolase (TA-iaaH), found in Agrobacterium vitis (Rhizobium vitis).